A 367-amino-acid chain; its full sequence is Quinolinate synthase (367 aa).

Iminosuccinate contacts are provided by His45 and Ser62. Cys109 provides a ligand contact to [4Fe-4S] cluster. Residues 140–142 (YVN) and Ser161 each bind iminosuccinate. Cys229 contributes to the [4Fe-4S] cluster binding site. Iminosuccinate is bound by residues 255 to 257 (HPE) and Thr272. Cys319 lines the [4Fe-4S] cluster pocket.

Belongs to the quinolinate synthase family. Type 3 subfamily. [4Fe-4S] cluster is required as a cofactor.

It localises to the cytoplasm. The catalysed reaction is iminosuccinate + dihydroxyacetone phosphate = quinolinate + phosphate + 2 H2O + H(+). The protein operates within cofactor biosynthesis; NAD(+) biosynthesis; quinolinate from iminoaspartate: step 1/1. Its function is as follows. Catalyzes the condensation of iminoaspartate with dihydroxyacetone phosphate to form quinolinate. This Geobacillus kaustophilus (strain HTA426) protein is Quinolinate synthase.